The chain runs to 70 residues: Melittin (70 aa).

Positions 1 to 21 are cleaved as a signal peptide; it reads MKFLVNVALVFMVVYISFIYA. The propeptide at 22–43 is removed by a dipeptidylpeptidase; it reads APEPEPAPEAEAEADAEADPEA. Glycine 44 is modified (N-formylglycine; partial). Residue glutamine 69 is modified to Glutamine amide.

It belongs to the melittin family. Monomer (in solution and for integration into membranes), homotetramer (in solution and potentially as a toroidal pore in membranes), and potenially homomultimer (as a toroidal pore in membranes). In terms of tissue distribution, expressed by the venom gland.

The protein resides in the secreted. It localises to the target cell membrane. Its function is as follows. Main toxin of bee venom with strong hemolytic activity and antimicrobial activity. It has enhancing effects on bee venom phospholipase A2 activity. This amphipathic toxin binds to negatively charged membrane surface and forms pore by inserting into lipid bilayers inducing the leakage of ions and molecules and the enhancement of permeability that ultimately leads to cell lysis. It acts as a voltage-gated pore with higher selectivity for anions over cations. The ion conductance has been shown to be voltage-dependent. Self-association of melittin in membranes is promoted by high ionic strength, but not by the presence of negatively charged lipids. In vivo, intradermal injection into healthy human volunteers produce sharp pain sensation and an inflammatory response. It produces pain by activating primary nociceptor cells directly and indirectly due to its ability to activate plasma membrane phospholipase A2 and its pore-forming activity. This Polistes hebraeus (Paper wasp) protein is Melittin (MELT).